Reading from the N-terminus, the 423-residue chain is UPF0229 protein PSPPH_0628 (423 aa).

The tract at residues 65–110 is disordered; sequence HHGRGGKQTVVHPGNKEFTTGEHIARPQGGGGGKGPGKAGNSGEGM. Over residues 92 to 107 the composition is skewed to gly residues; it reads QGGGGGKGPGKAGNSG.

It belongs to the UPF0229 family.

The chain is UPF0229 protein PSPPH_0628 from Pseudomonas savastanoi pv. phaseolicola (strain 1448A / Race 6) (Pseudomonas syringae pv. phaseolicola (strain 1448A / Race 6)).